The primary structure comprises 317 residues: DNA-directed RNA polymerase subunit alpha (317 aa).

Positions 1-229 are alpha N-terminal domain (alpha-NTD); sequence MLNEFIYPDK…KHYELLENIF (229 aa). Positions 245-317 are alpha C-terminal domain (alpha-CTD); that stretch reads AEKLSLSIEE…ELGMNIETQR (73 aa).

Belongs to the RNA polymerase alpha chain family. In terms of assembly, homodimer. The RNAP catalytic core consists of 2 alpha, 1 beta, 1 beta' and 1 omega subunit. When a sigma factor is associated with the core the holoenzyme is formed, which can initiate transcription.

It catalyses the reaction RNA(n) + a ribonucleoside 5'-triphosphate = RNA(n+1) + diphosphate. DNA-dependent RNA polymerase catalyzes the transcription of DNA into RNA using the four ribonucleoside triphosphates as substrates. The sequence is that of DNA-directed RNA polymerase subunit alpha from Aquifex aeolicus (strain VF5).